The sequence spans 83 residues: Beta-toxin Ct25 (83 aa).

The N-terminal stretch at 1–18 (MKVLILIIASVLLIGVEC) is a signal peptide. The LCN-type CS-alpha/beta domain occupies 19-81 (KDGYPKNSEG…VWDSATNKCG (63 aa)). 4 disulfide bridges follow: C29-C80, C33-C54, C40-C61, and C44-C63. Position 81 is a glycine amide (G81).

This sequence belongs to the long (4 C-C) scorpion toxin superfamily. Sodium channel inhibitor family. Beta subfamily. Expressed by the venom gland.

It localises to the secreted. Its function is as follows. Beta toxins bind voltage-independently at site-4 of sodium channels (Nav) and shift the voltage of activation toward more negative potentials thereby affecting sodium channel activation and promoting spontaneous and repetitive firing. The protein is Beta-toxin Ct25 of Centruroides tecomanus (Scorpion).